The sequence spans 120 residues: Large ribosomal subunit protein bL17 (120 aa).

Belongs to the bacterial ribosomal protein bL17 family. In terms of assembly, part of the 50S ribosomal subunit. Contacts protein L32.

The chain is Large ribosomal subunit protein bL17 from Geobacillus kaustophilus (strain HTA426).